The primary structure comprises 346 residues: Glycerol-1-phosphate dehydrogenase [NAD(P)+] (346 aa).

NAD(+)-binding positions include 93-97 and 115-118; these read GSIID and TTAS. Residue Asp-120 participates in substrate binding. NAD(+) is bound at residue Ser-124. A substrate-binding site is contributed by Asp-167. Residues Asp-167 and His-247 each coordinate Zn(2+). Substrate is bound at residue His-251. His-263 contacts Zn(2+).

The protein belongs to the glycerol-1-phosphate dehydrogenase family. Requires Zn(2+) as cofactor.

It localises to the cytoplasm. The catalysed reaction is sn-glycerol 1-phosphate + NAD(+) = dihydroxyacetone phosphate + NADH + H(+). The enzyme catalyses sn-glycerol 1-phosphate + NADP(+) = dihydroxyacetone phosphate + NADPH + H(+). It functions in the pathway membrane lipid metabolism; glycerophospholipid metabolism. In terms of biological role, catalyzes the NAD(P)H-dependent reduction of dihydroxyacetonephosphate (DHAP or glycerone phosphate) to glycerol 1-phosphate (G1P). The G1P thus generated is used as the glycerophosphate backbone of phospholipids in the cellular membranes of Archaea. The protein is Glycerol-1-phosphate dehydrogenase [NAD(P)+] of Pyrococcus horikoshii (strain ATCC 700860 / DSM 12428 / JCM 9974 / NBRC 100139 / OT-3).